A 590-amino-acid chain; its full sequence is Aspartate--tRNA(Asp/Asn) ligase (590 aa).

Glu-176 is an L-aspartate binding site. The segment at 200-203 (QLFK) is aspartate. The L-aspartate site is built by Arg-222 and His-451. 222 to 224 (RDE) contributes to the ATP binding site. Glu-485 provides a ligand contact to ATP. Residue Arg-492 coordinates L-aspartate. 537–540 (GIDR) serves as a coordination point for ATP.

It belongs to the class-II aminoacyl-tRNA synthetase family. Type 1 subfamily. In terms of assembly, homodimer.

The protein resides in the cytoplasm. The catalysed reaction is tRNA(Asx) + L-aspartate + ATP = L-aspartyl-tRNA(Asx) + AMP + diphosphate. Its function is as follows. Aspartyl-tRNA synthetase with relaxed tRNA specificity since it is able to aspartylate not only its cognate tRNA(Asp) but also tRNA(Asn). Reaction proceeds in two steps: L-aspartate is first activated by ATP to form Asp-AMP and then transferred to the acceptor end of tRNA(Asp/Asn). The chain is Aspartate--tRNA(Asp/Asn) ligase from Ehrlichia chaffeensis (strain ATCC CRL-10679 / Arkansas).